The following is a 339-amino-acid chain: Glycerol-3-phosphate dehydrogenase [NAD(P)+] (339 aa).

NADPH contacts are provided by S11, W12, and K109. 3 residues coordinate sn-glycerol 3-phosphate: K109, G140, and S142. A144 serves as a coordination point for NADPH. 5 residues coordinate sn-glycerol 3-phosphate: K195, D249, S259, R260, and N261. K195 (proton acceptor) is an active-site residue. R260 contributes to the NADPH binding site. NADPH is bound by residues V284 and E286.

The protein belongs to the NAD-dependent glycerol-3-phosphate dehydrogenase family.

The protein localises to the cytoplasm. It catalyses the reaction sn-glycerol 3-phosphate + NAD(+) = dihydroxyacetone phosphate + NADH + H(+). The enzyme catalyses sn-glycerol 3-phosphate + NADP(+) = dihydroxyacetone phosphate + NADPH + H(+). Its pathway is membrane lipid metabolism; glycerophospholipid metabolism. Functionally, catalyzes the reduction of the glycolytic intermediate dihydroxyacetone phosphate (DHAP) to sn-glycerol 3-phosphate (G3P), the key precursor for phospholipid synthesis. This is Glycerol-3-phosphate dehydrogenase [NAD(P)+] from Lactobacillus acidophilus (strain ATCC 700396 / NCK56 / N2 / NCFM).